Reading from the N-terminus, the 366-residue chain is 3-dehydroquinate synthase (366 aa).

NAD(+)-binding positions include 107–111 (GVIGD), 131–132 (TT), K144, and K153. E186, H251, and H268 together coordinate Zn(2+).

This sequence belongs to the sugar phosphate cyclases superfamily. Dehydroquinate synthase family. Co(2+) is required as a cofactor. Requires Zn(2+) as cofactor. NAD(+) serves as cofactor.

It localises to the cytoplasm. The enzyme catalyses 7-phospho-2-dehydro-3-deoxy-D-arabino-heptonate = 3-dehydroquinate + phosphate. It participates in metabolic intermediate biosynthesis; chorismate biosynthesis; chorismate from D-erythrose 4-phosphate and phosphoenolpyruvate: step 2/7. Functionally, catalyzes the conversion of 3-deoxy-D-arabino-heptulosonate 7-phosphate (DAHP) to dehydroquinate (DHQ). This is 3-dehydroquinate synthase from Microcystis aeruginosa (strain NIES-843 / IAM M-2473).